Consider the following 321-residue polypeptide: Probable DNA polymerase III subunit delta (321 aa).

The protein belongs to the DNA polymerase HolA subunit family. In terms of assembly, component of the DNA clamp loading complex consisting of tau(3):delta(1):delta'(1). The DNA polymerase III holoenzyme complex contains at least 10 different subunits organized into 3 functionally essential subassemblies: the Pol III core, the beta sliding clamp processivity factor and the clamp-loading complex. The Pol III core (subunits alpha, epsilon and theta) contains the polymerase and the 3'-5' exonuclease proofreading activities. The polymerase is tethered to the template via the dimeric beta sliding clamp processivity factor. The DNA clamp-loading complex assembles the beta sliding clamp onto the primed template and plays a central role in the organization and communication at the replication fork.

The enzyme catalyses DNA(n) + a 2'-deoxyribonucleoside 5'-triphosphate = DNA(n+1) + diphosphate. Functionally, part of the beta sliding clamp loading complex, which hydrolyzes ATP to load the beta clamp onto primed DNA to form the DNA replication pre-initiation complex. DNA polymerase III is a complex, multichain enzyme responsible for most of the replicative synthesis in bacteria. This DNA polymerase also exhibits 3'-5' exonuclease activity. The delta subunit is the wrench that will open the beta subunit dimer. The DNA clamp loading complex (tau(3),delta,delta') is thought to load beta dimers onto DNA by binding ATP which alters the complex's conformation so it can bind beta sliding clamp dimers and open them at one interface. Primed DNA is recognized, ATP is hydrolyzed releasing the clamp loading complex and closing the beta sliding clamp ring around the primed DNA. The chain is Probable DNA polymerase III subunit delta from Rickettsia prowazekii (strain Madrid E).